Here is a 150-residue protein sequence, read N- to C-terminus: UPF0260 protein PP_4587 (150 aa).

The protein belongs to the UPF0260 family.

This is UPF0260 protein PP_4587 from Pseudomonas putida (strain ATCC 47054 / DSM 6125 / CFBP 8728 / NCIMB 11950 / KT2440).